The following is a 372-amino-acid chain: Ciliary neurotrophic factor receptor subunit alpha (372 aa).

Residues 1-22 (MAAPVPWACCAVLAAAAAVVYA) form the signal peptide. Residues 27 to 104 (PQEAPHVQYE…WHLRHQVLLH (78 aa)) enclose the Ig-like C2-type domain. The cysteines at positions 46 and 89 are disulfide-linked. Residues N60, N70, N142, and N190 are each glycosylated (N-linked (GlcNAc...) asparagine). Fibronectin type-III domains are found at residues 108-205 (PPRE…VKPD) and 206-306 (PPEN…TEEP). The WSXWS motif motif lies at 290–294 (WSDWS). Residues 301–340 (PWTEEPRHLTTEAQAPETTTSTTSSLAPPPTTKICDPGEL) are disordered. Over residues 311–326 (TEAQAPETTTSTTSSL) the composition is skewed to low complexity. S342 is lipidated: GPI-anchor amidated serine. Residues 343-372 (GGGPSAPFLIHVPVTLALAAAAATANSLLI) constitute a propeptide, removed in mature form.

This sequence belongs to the type I cytokine receptor family. Type 3 subfamily. In terms of assembly, forms a heterotrimer with LIFR and IL6ST. Interacts with heterodimeric neurotropic cytokine composed of CLCF1/CLC and CRLF1/CLF-1. Either alone or in complex with the heterodimer CLCF1-CRLF1 interacts with SORL1; this interaction may promote internalization and lysosomal degradation. As to expression, expressed in retina, brain, spleen, lung, liver and kidney. In the retina it is highly expressed by photoreceptors, but also found in the RPE, inner nuclear layer and ganglion cells.

The protein localises to the cell membrane. Its function is as follows. Binds to CNTF. The alpha subunit provides the receptor specificity. In Canis lupus familiaris (Dog), this protein is Ciliary neurotrophic factor receptor subunit alpha (CNTFR).